Here is a 715-residue protein sequence, read N- to C-terminus: Polyribonucleotide nucleotidyltransferase (715 aa).

Mg(2+) contacts are provided by Asp495 and Asp501. Residues 562–621 (PRLLTLQIPPDMIGLVIGPGGKTVRGISEQYNVKVDISEEGLVTITAPNETNAKQARAAI) enclose the KH domain. Residues 631 to 699 (GDVYLGRVTR…SKGRINLTRL (69 aa)) enclose the S1 motif domain.

It belongs to the polyribonucleotide nucleotidyltransferase family. Mg(2+) serves as cofactor.

The protein resides in the cytoplasm. It catalyses the reaction RNA(n+1) + phosphate = RNA(n) + a ribonucleoside 5'-diphosphate. Involved in mRNA degradation. Catalyzes the phosphorolysis of single-stranded polyribonucleotides processively in the 3'- to 5'-direction. This chain is Polyribonucleotide nucleotidyltransferase, found in Thermosynechococcus vestitus (strain NIES-2133 / IAM M-273 / BP-1).